A 394-amino-acid chain; its full sequence is Elongation factor Tu (394 aa).

The region spanning 10–204 (KPHVNIGTIG…AVDSYIPQPV (195 aa)) is the tr-type G domain. Residues 19–26 (GHVDHGKT) form a G1 region. 19 to 26 (GHVDHGKT) lines the GTP pocket. Residue T26 participates in Mg(2+) binding. Positions 60 to 64 (GITIS) are G2. The tract at residues 81 to 84 (DCPG) is G3. GTP is bound by residues 81-85 (DCPGH) and 136-139 (NKVD). The G4 stretch occupies residues 136–139 (NKVD). The interval 174–176 (SAL) is G5.

This sequence belongs to the TRAFAC class translation factor GTPase superfamily. Classic translation factor GTPase family. EF-Tu/EF-1A subfamily. In terms of assembly, monomer.

The protein localises to the cytoplasm. The enzyme catalyses GTP + H2O = GDP + phosphate + H(+). In terms of biological role, GTP hydrolase that promotes the GTP-dependent binding of aminoacyl-tRNA to the A-site of ribosomes during protein biosynthesis. This chain is Elongation factor Tu, found in Rickettsia massiliae (strain Mtu5).